Here is a 44-residue protein sequence, read N- to C-terminus: Photosystem I reaction center subunit IX (44 aa).

The chain crosses the membrane as a helical span at residues 7–27; it reads YLSVAPVISTLWFGSLAGLLI.

It belongs to the PsaJ family.

The protein localises to the plastid. It localises to the chloroplast thylakoid membrane. Its function is as follows. May help in the organization of the PsaE and PsaF subunits. This Ceratophyllum demersum (Rigid hornwort) protein is Photosystem I reaction center subunit IX.